A 668-amino-acid chain; its full sequence is DNA ligase (668 aa).

NAD(+) contacts are provided by residues 37–41, 86–87, and Glu-116; these read DNVYD and SM. The active-site N6-AMP-lysine intermediate is Lys-118. 4 residues coordinate NAD(+): Arg-139, Glu-173, Lys-288, and Lys-312. Residues Cys-406, Cys-409, Cys-424, and Cys-429 each contribute to the Zn(2+) site. The 78-residue stretch at 591-668 folds into the BRCT domain; sequence IPDNPFKDKT…TEEEAIAQIK (78 aa).

Belongs to the NAD-dependent DNA ligase family. LigA subfamily. Mg(2+) is required as a cofactor. Requires Mn(2+) as cofactor.

It catalyses the reaction NAD(+) + (deoxyribonucleotide)n-3'-hydroxyl + 5'-phospho-(deoxyribonucleotide)m = (deoxyribonucleotide)n+m + AMP + beta-nicotinamide D-nucleotide.. Functionally, DNA ligase that catalyzes the formation of phosphodiester linkages between 5'-phosphoryl and 3'-hydroxyl groups in double-stranded DNA using NAD as a coenzyme and as the energy source for the reaction. It is essential for DNA replication and repair of damaged DNA. The protein is DNA ligase of Lactobacillus acidophilus (strain ATCC 700396 / NCK56 / N2 / NCFM).